The chain runs to 368 residues: Aminomethyltransferase (368 aa).

The protein belongs to the GcvT family. The glycine cleavage system is composed of four proteins: P, T, L and H.

The enzyme catalyses N(6)-[(R)-S(8)-aminomethyldihydrolipoyl]-L-lysyl-[protein] + (6S)-5,6,7,8-tetrahydrofolate = N(6)-[(R)-dihydrolipoyl]-L-lysyl-[protein] + (6R)-5,10-methylene-5,6,7,8-tetrahydrofolate + NH4(+). Its function is as follows. The glycine cleavage system catalyzes the degradation of glycine. This is Aminomethyltransferase from Xylella fastidiosa (strain M23).